Consider the following 153-residue polypeptide: Small ribosomal subunit protein uS5 (153 aa).

An S5 DRBM domain is found at 15-78 (FQEVVVNIGR…DDAFKNLIHV (64 aa)).

It belongs to the universal ribosomal protein uS5 family. In terms of assembly, part of the 30S ribosomal subunit. Contacts proteins S4 and S8.

Functionally, with S4 and S12 plays an important role in translational accuracy. In terms of biological role, located at the back of the 30S subunit body where it stabilizes the conformation of the head with respect to the body. This is Small ribosomal subunit protein uS5 from Helicobacter pylori (strain P12).